Reading from the N-terminus, the 380-residue chain is Aprataxin (380 aa).

One can recognise an FHA-like domain in the interval 36–85 (PVIIGRTPELGITDKLCSRSQLELTSNCYKRYVLVKRLGANTSQINGIDI). The interval 176–207 (VYAFDSPSPMSSRCEKKAESNKRAPTHKHWSQ) is disordered. A compositionally biased stretch (basic and acidic residues) spans 188 to 197 (RCEKKAESNK). Residues 206 to 312 (SQGLKASMED…ISQDFQSSSF (107 aa)) enclose the HIT domain. Interaction with DNA substrate stretches follow at residues 231–235 (DKYPK) and 294–295 (SM). The short motif at 297–301 (QMHMH) is the Histidine triad motif element. The Tele-AMP-histidine intermediate role is filled by H299. Residues 356-378 (LKCHRCKKPQKNIPTLKKHIDSC) form a C2H2-type; atypical zinc finger.

The protein localises to the nucleus. The protein resides in the nucleoplasm. It is found in the nucleolus. It catalyses the reaction a 5'-end adenosine-5'-diphospho-5'-2'-deoxyribonucleoside-DNA + H2O = a 5'-end 5'-phospho-2'-deoxyribonucleoside-DNA + AMP + 2 H(+). It carries out the reaction a 5'-end adenosine-5'-diphospho-5'-ribonucleoside-2'-deoxyribonucleotide-DNA + H2O = a 5'-end 5'-phospho-ribonucleoside-2'-deoxyribonucleotide-DNA + AMP + 2 H(+). The catalysed reaction is a 3'-end 2'-deoxyribonucleotide-3'-diphospho-5'-guanosine-DNA + H2O = a 3'-end 2'-deoxyribonucleotide 3'-phosphate-DNA + GMP + 2 H(+). DNA-binding protein involved in single-strand DNA break repair, double-strand DNA break repair and base excision repair. Resolves abortive DNA ligation intermediates formed either at base excision sites, or when DNA ligases attempt to repair non-ligatable breaks induced by reactive oxygen species. Catalyzes the release of adenylate groups covalently linked to 5'-phosphate termini, resulting in the production of 5'-phosphate termini that can be efficiently rejoined. Also able to hydrolyze adenosine 5'-monophosphoramidate (AMP-NH(2)) and diadenosine tetraphosphate (AppppA), but with lower catalytic activity. Likewise, catalyzes the release of 3'-linked guanosine (DNAppG) and inosine (DNAppI) from DNA, but has higher specific activity with 5'-linked adenosine (AppDNA). This Ciona intestinalis (Transparent sea squirt) protein is Aprataxin (APTX).